The sequence spans 124 residues: MLVIFLGILGLLANQVLGLPTQAGGHLRSTDNPPEEELKYWCTYMESCKFCWECTHGLCKNKVNESMPTIIENSYLTSCEVSRWYNQCTYDEGNGHYHVMDCSDPVPHNRPHRLRMKIYKKEDL.

The signal sequence occupies residues 1–28; that stretch reads MLVIFLGILGLLANQVLGLPTQAGGHLR. Residue Asn-64 is glycosylated (N-linked (GlcNAc...) asparagine; by host). Residues 121–124 carry the Prevents secretion from ER motif; sequence KEDL.

It belongs to the asfivirus MGF 110 family.

The protein resides in the virion. The protein localises to the host endoplasmic reticulum-Golgi intermediate compartment. Functionally, causes the redistribution of lumenal ER protein to an enlarged ERGIC compartment. The sequence is that of Protein MGF 110-4L from Ornithodoros (relapsing fever ticks).